We begin with the raw amino-acid sequence, 673 residues long: Glycine--tRNA ligase beta subunit (673 aa).

Belongs to the class-II aminoacyl-tRNA synthetase family. In terms of assembly, tetramer of two alpha and two beta subunits.

It is found in the cytoplasm. The catalysed reaction is tRNA(Gly) + glycine + ATP = glycyl-tRNA(Gly) + AMP + diphosphate. In Lactococcus lactis subsp. lactis (strain IL1403) (Streptococcus lactis), this protein is Glycine--tRNA ligase beta subunit.